A 290-amino-acid polypeptide reads, in one-letter code: MALSRPLPSWLRKPLGKASEISTVQRLVRQYGIHTICEEGRCPNRGECYGQKTATFLLLGPTCTRACAFCQVEKGHAPAAVDPEEPTKIAAAVATLGLRYVVLTSVARDDLPDQGAGQFVATMAAIRQRCPGTEIEVLSPDFRMDRGRLSQRDCIAQIVAAQPACYNHNLETVRRLQGPVRRGATYESSLRVLATVKELNPDIPTKSGLMLGLGETEAEIIETLKDLRRVGCDRLTLGQYLPPSLSHLPVVKYWTPEEFNTLGNIARELGFSHVRSGPLVRSSYHAAEGG.

Positions 37, 42, 48, 63, 67, 70, and 283 each coordinate [4Fe-4S] cluster. The Radical SAM core domain occupies Y49 to S272.

The protein belongs to the radical SAM superfamily. Lipoyl synthase family. Requires [4Fe-4S] cluster as cofactor.

It is found in the cytoplasm. The catalysed reaction is [[Fe-S] cluster scaffold protein carrying a second [4Fe-4S](2+) cluster] + N(6)-octanoyl-L-lysyl-[protein] + 2 oxidized [2Fe-2S]-[ferredoxin] + 2 S-adenosyl-L-methionine + 4 H(+) = [[Fe-S] cluster scaffold protein] + N(6)-[(R)-dihydrolipoyl]-L-lysyl-[protein] + 4 Fe(3+) + 2 hydrogen sulfide + 2 5'-deoxyadenosine + 2 L-methionine + 2 reduced [2Fe-2S]-[ferredoxin]. It functions in the pathway protein modification; protein lipoylation via endogenous pathway; protein N(6)-(lipoyl)lysine from octanoyl-[acyl-carrier-protein]: step 2/2. In terms of biological role, catalyzes the radical-mediated insertion of two sulfur atoms into the C-6 and C-8 positions of the octanoyl moiety bound to the lipoyl domains of lipoate-dependent enzymes, thereby converting the octanoylated domains into lipoylated derivatives. The polypeptide is Lipoyl synthase 2 (Thermosynechococcus vestitus (strain NIES-2133 / IAM M-273 / BP-1)).